Reading from the N-terminus, the 182-residue chain is UPF0397 protein YdcD (182 aa).

5 helical membrane passes run 8-28 (IVVATGIGAALFVIIGWLINI), 42-62 (AVLALFSALFGPLAGFLIGFI), 74-94 (APWWTWVLGSGLIGLFLAFGV), 114-134 (IVQFLANVVVWGIIAPIGDVL), and 146-166 (QGIVAGLVNALTIAVAGTLLL).

This sequence belongs to the UPF0397 family.

The protein resides in the cell membrane. The chain is UPF0397 protein YdcD (ydcD) from Lactococcus lactis subsp. lactis (strain IL1403) (Streptococcus lactis).